The primary structure comprises 160 residues: Ribosome maturation factor RimP (160 aa).

The protein belongs to the RimP family.

Its subcellular location is the cytoplasm. In terms of biological role, required for maturation of 30S ribosomal subunits. The sequence is that of Ribosome maturation factor RimP from Orientia tsutsugamushi (strain Boryong) (Rickettsia tsutsugamushi).